The sequence spans 374 residues: Queuine tRNA-ribosyltransferase (374 aa).

The active-site Proton acceptor is the aspartate 91. Substrate is bound by residues aspartate 91–tyrosine 95, aspartate 145, glutamine 189, and glycine 216. The interval glycine 247–aspartate 253 is RNA binding. Aspartate 266 functions as the Nucleophile in the catalytic mechanism. The interval threonine 271–arginine 275 is RNA binding; important for wobble base 34 recognition. Residues cysteine 304, cysteine 306, cysteine 309, and histidine 335 each coordinate Zn(2+).

It belongs to the queuine tRNA-ribosyltransferase family. As to quaternary structure, homodimer. Within each dimer, one monomer is responsible for RNA recognition and catalysis, while the other monomer binds to the replacement base PreQ1. The cofactor is Zn(2+).

It carries out the reaction 7-aminomethyl-7-carbaguanine + guanosine(34) in tRNA = 7-aminomethyl-7-carbaguanosine(34) in tRNA + guanine. The protein operates within tRNA modification; tRNA-queuosine biosynthesis. Functionally, catalyzes the base-exchange of a guanine (G) residue with the queuine precursor 7-aminomethyl-7-deazaguanine (PreQ1) at position 34 (anticodon wobble position) in tRNAs with GU(N) anticodons (tRNA-Asp, -Asn, -His and -Tyr). Catalysis occurs through a double-displacement mechanism. The nucleophile active site attacks the C1' of nucleotide 34 to detach the guanine base from the RNA, forming a covalent enzyme-RNA intermediate. The proton acceptor active site deprotonates the incoming PreQ1, allowing a nucleophilic attack on the C1' of the ribose to form the product. After dissociation, two additional enzymatic reactions on the tRNA convert PreQ1 to queuine (Q), resulting in the hypermodified nucleoside queuosine (7-(((4,5-cis-dihydroxy-2-cyclopenten-1-yl)amino)methyl)-7-deazaguanosine). The protein is Queuine tRNA-ribosyltransferase of Leptospira borgpetersenii serovar Hardjo-bovis (strain JB197).